Consider the following 375-residue polypeptide: Chaperone protein DnaJ (375 aa).

A J domain is found at 5 to 70 (DYYEILGVSK…QKRAAYDQYG (66 aa)). The CR-type zinc-finger motif lies at 130–208 (GVTKEIRIPT…CHGHGRVEKS (79 aa)). 8 residues coordinate Zn(2+): Cys-143, Cys-146, Cys-160, Cys-163, Cys-182, Cys-185, Cys-196, and Cys-199. CXXCXGXG motif repeat units lie at residues 143 to 150 (CDVCHGSG), 160 to 167 (CPTCHGSG), 182 to 189 (CPHCQGRG), and 196 to 203 (CHKCHGHG).

It belongs to the DnaJ family. Homodimer. The cofactor is Zn(2+).

It localises to the cytoplasm. Its function is as follows. Participates actively in the response to hyperosmotic and heat shock by preventing the aggregation of stress-denatured proteins and by disaggregating proteins, also in an autonomous, DnaK-independent fashion. Unfolded proteins bind initially to DnaJ; upon interaction with the DnaJ-bound protein, DnaK hydrolyzes its bound ATP, resulting in the formation of a stable complex. GrpE releases ADP from DnaK; ATP binding to DnaK triggers the release of the substrate protein, thus completing the reaction cycle. Several rounds of ATP-dependent interactions between DnaJ, DnaK and GrpE are required for fully efficient folding. Also involved, together with DnaK and GrpE, in the DNA replication of plasmids through activation of initiation proteins. The protein is Chaperone protein DnaJ of Salmonella paratyphi A (strain ATCC 9150 / SARB42).